Reading from the N-terminus, the 245-residue chain is 14-3-3 protein zeta (245 aa).

Belongs to the 14-3-3 family. As to quaternary structure, homodimer. Present in all adult tissues examined with the highest levels in the brain.

It localises to the cytoplasm. Functionally, adapter protein implicated in the regulation of a large spectrum of both general and specialized signaling pathways. Binds to a large number of partners, usually by recognition of a phosphoserine or phosphothreonine motif. Binding generally results in the modulation of the activity of the binding partner. This chain is 14-3-3 protein zeta (ywhaz), found in Xenopus laevis (African clawed frog).